The primary structure comprises 1002 residues: MWRYISKQAYSRKFRNSHDSALLGFSQYSSSFGKTRPLQCLCEESTTNPNLGLSQNSIFSRISRKVRHLEGICEESSKNPHLGLSQNSLFSSVKGDFRVCGKRGSGSLGFLRSYGSAAEAIASTSEEDIDEIQELIEEMNKENEALKTNLQPKQPKTIGGMGVGKYNLLRRRQIKVETEAWEEAAKEYQELLMDMCEQKLAPNLPYMKSLFLGWFEPLRDAIAAEQKLCDEGKNRGAYAPFFDQLPAEMMAVITMHKLMGLLMTGGGTGSARVVQAASHIGEAIEHEARIHRFLEKTKKSNALSGDLEDTPGDIMKERERVRKKVKILMKKQKLQQVRKIVKQQDDEKPWGQDNLVKVGCRLIQILMETAYIQPPNDQLDDCPPDIRPAFVHTLKTVETMKGSRRYGVIQCDPLVRKGLDKTARHMVIPYMPMLVPPQSWLGYDKGAYLFLPSYIMRTHGAKQQREAVKRVPKKQLEPVFQALDTLGNTKWRLNRKVLGIVDRIWASGGRLADLVDREDVPLPEEPDAEDEAQIRKWKWKVKGVKKENCERHSQRCDIELKLAVARKMKDEDGFYYPHNLDFRGRAYPMHPYLNHLGSDLCRGILEFAEGRPLGKSGLRWLKIHLANVYGGGVDKLSYEGRVAFSENHVEDIFDSAERPLEGKRWWLGAEDPFQCLATCINIAEALRSPSPETAISYMPIHQDGSCNGLQHYAALGRDTLGAAAVNLVAGDKPADVYSGIAARVLDIMKRDAAKDPANDPNVMRARLLINQVDRKLVKQTVMTSVYGVTYIGARDQIKRRLKERGVIEDDNELFAAACYAAKTTLTALGEMFEAARSIMSWLGDCAKIIAMENHPVRWTTPLGLPVVQPYRKLGRHLIKTSLQILTLQRETDKVMVKRQRTAFPPNFVHSLDGSHMMMTAIACKESGLSFAGVHDSYWTHASDVDQMNKILREKFVELYDAPILENLLESFQQSFPDLQFPPLPERGDFDLREVLESPYFFN.

The transit peptide at 1 to 21 (MWRYISKQAYSRKFRNSHDSA) directs the protein to the mitochondrion. Catalysis depends on residues Asp-703, Lys-778, and Asp-935.

This sequence belongs to the phage and mitochondrial RNA polymerase family. As to expression, the highest levels of expression are detected in the mature leaves. The level of expression is lowest in the cotyledons.

It is found in the mitochondrion. It catalyses the reaction RNA(n) + a ribonucleoside 5'-triphosphate = RNA(n+1) + diphosphate. In terms of biological role, DNA-dependent RNA polymerase catalyzes the transcription of DNA into RNA using the four ribonucleoside triphosphates as substrates. The polypeptide is DNA-directed RNA polymerase 1, mitochondrial (RPOT1) (Nicotiana sylvestris (Wood tobacco)).